The chain runs to 108 residues: L-rhamnose mutarotase (108 aa).

Tyrosine 18 provides a ligand contact to substrate. Histidine 22 (proton donor) is an active-site residue. Substrate-binding positions include tyrosine 41 and 76-77; that span reads WW.

Belongs to the rhamnose mutarotase family. As to quaternary structure, homodimer.

Its subcellular location is the cytoplasm. The catalysed reaction is alpha-L-rhamnose = beta-L-rhamnose. It functions in the pathway carbohydrate metabolism; L-rhamnose metabolism. In terms of biological role, involved in the anomeric conversion of L-rhamnose. The polypeptide is L-rhamnose mutarotase (Paraburkholderia phymatum (strain DSM 17167 / CIP 108236 / LMG 21445 / STM815) (Burkholderia phymatum)).